We begin with the raw amino-acid sequence, 275 residues long: Sororin-B (275 aa).

Residues 1-16 (MSERKKRGSSDADSRR) are compositionally biased toward basic and acidic residues. 2 disordered regions span residues 1–42 (MSER…PAPI) and 63–117 (NTGS…EIDV). Composition is skewed to polar residues over residues 63–76 (NTGSQFTPKVSNVT) and 93–112 (NAFSEQSQMDPKDVTSQSSA). A KEN box motif is present at residues 91-93 (KEN). An FGF motif motif is present at residues 186-188 (FGF). Residues 253–275 (VDEWAAIMNAEFDEAEKFDLTVE) are C-terminal Sororin domain.

Belongs to the sororin family. In terms of assembly, interacts with the APC/C complex. Interacts with the chromatin-bound cohesin complex; the interaction is indirect, occurs after DNA replication and requires acetylation of the cohesin component smc3. Interacts (via the FGF motif) with pds5a and pds5b; the interaction is direct and prevents the interaction of pds5a with wapl. Post-translationally, ubiquitinated by the APC/C complex in G1, leading to its degradation.

It localises to the nucleus. The protein localises to the chromosome. The protein resides in the cytoplasm. Its function is as follows. Regulator of sister chromatid cohesion in mitosis stabilizing cohesin complex association with chromatin. May antagonize the action of wapl which stimulates cohesin dissociation from chromatin. Cohesion ensures that chromosome partitioning is accurate in both meiotic and mitotic cells and plays an important role in DNA repair. Required for efficient DNA double-stranded break repair. The polypeptide is Sororin-B (cdca5-b) (Xenopus laevis (African clawed frog)).